Reading from the N-terminus, the 410-residue chain is MSYDRVKDFDLPELAVHLQPHGAVMIDRKSMFYFRLSGRGAQLAFLLSKNKNLHKTARIWEIMKKEEMSADQLKEELSAHPFTEAWTEGLLDQPLHVSGSLDSYLPISCTLQLTNACNLSCSFCYASSGKPYPEELSSEQWILVMQKLAAHGVADITLTGGEAKLIKGFKELVVVASSLFTNVNVFSNGLNWRDEEVELLSHLGNVSVQISIDGMDNTHDQLRGRKGGFKESMNTIKKLSEANIPVIVAMTINESNADEVSDVVEQCANAGAFIFRAGKTLSVGRATEGFKALDIDFEEMVQIQLREARHKWGDRLNIIDWEHEESSFTTDFCTPGYLAWYIRADGYVTPCQLEDLPLGHILEDSMADIGSPARLLQLKCEAKNCKCIGKIELSEPDLPFQKEVKAGIQE.

The 212-residue stretch at 103–314 (SYLPISCTLQ…LREARHKWGD (212 aa)) folds into the Radical SAM core domain. Residues Cys-117, Cys-121, Cys-124, Cys-380, Cys-385, and Cys-387 each contribute to the [4Fe-4S] cluster site.

It belongs to the radical SAM superfamily. [4Fe-4S] cluster serves as cofactor.

It is found in the cytoplasm. In terms of biological role, catalyzes the formation of the thioether bond required for production of the sporulation killing factor (SKF) from SkfA. Forms the cysteine-methionine thioether bond found in SKF; the acceptor amino acid can be hydrophobic, aromatic or a small hydrophilic amino acid but not a larger hydrophilic amino acid, i.e. Met=Ala, Phe, Leu, Tyr&gt;Asn, Ser&gt;&gt;Gln, Glu, Lys. The relative position of Cys and Met in the substrate cannot be inverted, in vitro the thioether bond cannot be made in the absence of the SkfA propeptide, suggesting this is the first reaction in SKF maturation. In vitro, in the absence of a second substrate, cleaves S-adenosyl-L-methionine into Met and 5'-dA. In Bacillus subtilis (strain 168), this protein is Sporulation killing factor maturation protein SkfB.